The primary structure comprises 321 residues: CRISPR-associated aCascade subunit Cas7/Csa2 2 (321 aa).

It belongs to the CRISPR-associated protein Cas7/Cst2/DevR family. Subtype I-a/Apern subfamily. In terms of assembly, part of the aCascade ribonucleoprotein complex, minimally composed of Csa2 and Cas5a, which binds crRNA. Other possible components of aCascade in strain P1 are Cas6b (SSO1437) and Csa5 (SSO1443), while SSO1399, Cas5b (SSO1400) and SSO1401 have sometimes been seen weakly associated. Csa2 is probably the major RNA-binding subunit. The Csa2-Cas5a-crRNA complex also binds target DNA homologous to crRNA, probably forming an R-loop. Purified aCascade forms a filament about 6 nm in width.

CRISPR (clustered regularly interspaced short palindromic repeat) is an adaptive immune system that provides protection against mobile genetic elements (viruses, transposable elements and conjugative plasmids). CRISPR clusters contain spacers, sequences complementary to antecedent mobile elements, and target invading nucleic acids. CRISPR clusters are transcribed and processed into CRISPR RNA (crRNA). The polypeptide is CRISPR-associated aCascade subunit Cas7/Csa2 2 (csa2b) (Saccharolobus solfataricus (strain ATCC 35092 / DSM 1617 / JCM 11322 / P2) (Sulfolobus solfataricus)).